Here is a 369-residue protein sequence, read N- to C-terminus: Nuclear pore complex-interacting protein family member A2 (369 aa).

Residues 325-346 (KTPPECLLTPLPPSAPPSADDN) are disordered.

The protein belongs to the NPIP family.

The chain is Nuclear pore complex-interacting protein family member A2 (NPIPA2) from Homo sapiens (Human).